Reading from the N-terminus, the 263-residue chain is Endonuclease 8 (263 aa).

The active-site Schiff-base intermediate with DNA is Pro2. Glu3 (proton donor) is an active-site residue. Catalysis depends on Lys53, which acts as the Proton donor; for beta-elimination activity. DNA contacts are provided by Gln70, Arg125, and Asn169. An FPG-type zinc finger spans residues 229 to 263 (KVFHRDGEACERCGGIIEKTTLSSRPFYWCPHCQK). Residue Arg253 is the Proton donor; for delta-elimination activity of the active site.

Belongs to the FPG family. Zn(2+) serves as cofactor.

It catalyses the reaction 2'-deoxyribonucleotide-(2'-deoxyribose 5'-phosphate)-2'-deoxyribonucleotide-DNA = a 3'-end 2'-deoxyribonucleotide-(2,3-dehydro-2,3-deoxyribose 5'-phosphate)-DNA + a 5'-end 5'-phospho-2'-deoxyribonucleoside-DNA + H(+). Involved in base excision repair of DNA damaged by oxidation or by mutagenic agents. Acts as a DNA glycosylase that recognizes and removes damaged bases. Has a preference for oxidized pyrimidines, such as thymine glycol, 5,6-dihydrouracil and 5,6-dihydrothymine. Has AP (apurinic/apyrimidinic) lyase activity and introduces nicks in the DNA strand. Cleaves the DNA backbone by beta-delta elimination to generate a single-strand break at the site of the removed base with both 3'- and 5'-phosphates. This Salmonella paratyphi A (strain AKU_12601) protein is Endonuclease 8.